A 374-amino-acid polypeptide reads, in one-letter code: 4-hydroxybenzoate polyprenyltransferase, mitochondrial (374 aa).

Residues 1-63 (MLRLGGAGLV…RALSLSAAAV (63 aa)) constitute a mitochondrion transit peptide. The Mitochondrial matrix portion of the chain corresponds to 64-83 (VNSAPRPLQPYLRLMRLDKP). The helical transmembrane segment at 84 to 104 (IGTWLLYLPCTWSIGLAADPG) threads the bilayer. At 105 to 108 (CFPD) the chain is on the mitochondrial intermembrane side. Residues 109–129 (WYMLSLFGTGAILMRGAGCTI) form a helical membrane-spanning segment. Topologically, residues 130 to 153 (NDMWDRDFDKKVERTANRPIAAGD) are mitochondrial matrix. The chain crosses the membrane as a helical span at residues 154-174 (ISAFQSFVFLGAQLTLALGVL). Over 175–176 (LH) the chain is Mitochondrial intermembrane. The helical transmembrane segment at 177–197 (LNYYSIAMGAASLLLVVTYPL) threads the bilayer. The Mitochondrial matrix segment spans residues 198 to 200 (MKR). The helical transmembrane segment at 201-221 (VTFWPQLALGLTFNWGALLGW) threads the bilayer. Over 222 to 230 (SAVKGSCDP) the chain is Mitochondrial intermembrane. The chain crosses the membrane as a helical span at residues 231 to 251 (AVCLPLYFSGVMWTLIYDTIY). Over 252-277 (AHQDKKDDALIGLKSTALLFRENTKQ) the chain is Mitochondrial matrix. A helical membrane pass occupies residues 278–298 (WLSGFGVAMVGALSLVGASSG). Residues 299 to 300 (QT) lie on the Mitochondrial intermembrane side of the membrane. Residues 301–321 (LPYYAAVAAVGAHLAHQIYTV) traverse the membrane as a helical segment. Topologically, residues 322–332 (DIHRAEDCWEK) are mitochondrial matrix. A helical membrane pass occupies residues 333–353 (FTSNRTVGLLLFLGIVLGNLY). Topologically, residues 354-374 (KDKPDETKGVDAVGEESERTS) are mitochondrial intermembrane.

It belongs to the UbiA prenyltransferase family. The cofactor is Mg(2+).

The protein localises to the mitochondrion inner membrane. The enzyme catalyses an all-trans-polyprenyl diphosphate + 4-hydroxybenzoate = a 4-hydroxy-3-(all-trans-polyprenyl)benzoate + diphosphate. It catalyses the reaction all-trans-decaprenyl diphosphate + 4-hydroxybenzoate = 4-hydroxy-3-(all-trans-decaprenyl)benzoate + diphosphate. It carries out the reaction all-trans-nonaprenyl diphosphate + 4-hydroxybenzoate = 4-hydroxy-3-(all-trans-nonaprenyl)benzoate + diphosphate. It functions in the pathway cofactor biosynthesis; ubiquinone biosynthesis. In terms of biological role, mediates the second step in the final reaction sequence of coenzyme Q (CoQ) biosynthesis. Catalyzes the prenylation of para-hydroxybenzoate (PHB) with an all-trans polyprenyl group (such as all-trans-nonaprenyl diphosphate). The length of the polyprenyl side chain varies depending on the species, in humans, the side chain is comprised of 10 isoprenyls producing CoQ10 (also known as ubiquinone), whereas rodents predominantly generate CoQ9. However, this specificity is not complete, human tissues have low amounts of CoQ9 and rodent organs contain some CoQ10. Plays a central role in the biosynthesis of CoQ9. CoQ9 is a vital molecule that transports electrons from mitochondrial respiratory chain complexes. CoQs also function as cofactors for uncoupling protein and plays a role as regulator of the extracellularly-induced ceramide-dependent apoptotic pathway. Regulates mitochondrial permeability transition pore (mPTP) opening and ROS production (pivotal events in cell death) in a tissue specific manner. The protein is 4-hydroxybenzoate polyprenyltransferase, mitochondrial of Rattus norvegicus (Rat).